Here is a 621-residue protein sequence, read N- to C-terminus: Anthranilate synthase alpha subunit 2, chloroplastic (621 aa).

The N-terminal 87 residues, 1-87 (MSAVSISAVK…SEEQFTKFKK (87 aa)), are a transit peptide targeting the chloroplast.

This sequence belongs to the anthranilate synthase component I family. Heterotetramer consisting of two non-identical subunits: a beta subunit and a large alpha subunit.

It localises to the plastid. The protein localises to the chloroplast. The catalysed reaction is chorismate + L-glutamine = anthranilate + pyruvate + L-glutamate + H(+). The protein operates within amino-acid biosynthesis; L-tryptophan biosynthesis; L-tryptophan from chorismate: step 1/5. With respect to regulation, feedback inhibition by tryptophan. Functionally, part of a heterotetrameric complex that catalyzes the two-step biosynthesis of anthranilate, an intermediate in the biosynthesis of L-tryptophan. In the first step, the glutamine-binding beta subunit of anthranilate synthase (AS) provides the glutamine amidotransferase activity which generates ammonia as a substrate that, along with chorismate, is used in the second step, catalyzed by the large alpha subunit of AS to produce anthranilate. This Arabidopsis thaliana (Mouse-ear cress) protein is Anthranilate synthase alpha subunit 2, chloroplastic (ASA2).